The following is a 547-amino-acid chain: MADTKQDMENSEDGRKLVKMSSLKQKAISASNRFKNSFKKKTRRTSSKIVSVANTDDINGDDYLSVEAFRQVLVLDDLLPPKHDDLHMMLRFLRARKFDKEKAKQMWSDMLQWRMDFGVDTIIEDFEFEEIDQVLKHYPQGYHGVDKEGRPVYIERLGQIDANKLLQATTMDRYEKYHVKEFEKMFKIKFPSCSAAAKKHIDQSTTIFDVQGVGLKNFNKSARELLQRLLKIDNDNYPETLNRMFIINAGPGFRLLWAPIKKFLDPKTTSKIHVLGNKYQPKLLEAIDASELPYFFGGLCTCADKGGCLRSDKGPWNDPELLKIARNPEARFSTISEEDYLLVEEGTSMSMVFEPLERNKMKTIEENVSEKHIDAVDKFMALSLPPKPHLKTLRKGKEPQKKDDSFLVGGVIAFVMGIVAMLRLSKAVPRKLTDVALLTNSVYYEEAKMSKPNQDEVSAPPVSSSEYVIMVKRMAELEEKYKSLDSKSADEALEKDDKLQAALNRVQVLEHELSETKKALDETMVNQQGILAYIEKKNKKKRMFFRF.

One can recognise a CRAL-TRIO domain in the interval 130–304 (EIDQVLKHYP…FFGGLCTCAD (175 aa)). Residues 464–526 (SSEYVIMVKR…KKALDETMVN (63 aa)) adopt a coiled-coil conformation.

The protein belongs to the SFH family.

Its subcellular location is the golgi apparatus membrane. It localises to the cell membrane. Required for transport of secretory proteins from the Golgi complex. Catalyzes the transfer of phosphatidylinositol and phosphatidylcholine between membranes in vitro. The chain is Phosphatidylinositol/phosphatidylcholine transfer protein SFH7 (SFH7) from Arabidopsis thaliana (Mouse-ear cress).